The sequence spans 500 residues: Glycerol kinase (500 aa).

T11 contacts ADP. T11, T12, and S13 together coordinate ATP. T11 contacts sn-glycerol 3-phosphate. R15 lines the ADP pocket. Residues R81, E82, Y133, and D242 each coordinate sn-glycerol 3-phosphate. R81, E82, Y133, D242, and Q243 together coordinate glycerol. Residues T264 and G307 each contribute to the ADP site. ATP is bound by residues T264, G307, Q311, and G411. G411 lines the ADP pocket.

The protein belongs to the FGGY kinase family.

The enzyme catalyses glycerol + ATP = sn-glycerol 3-phosphate + ADP + H(+). It participates in polyol metabolism; glycerol degradation via glycerol kinase pathway; sn-glycerol 3-phosphate from glycerol: step 1/1. With respect to regulation, inhibited by fructose 1,6-bisphosphate (FBP). Key enzyme in the regulation of glycerol uptake and metabolism. Catalyzes the phosphorylation of glycerol to yield sn-glycerol 3-phosphate. This is Glycerol kinase from Rhodopseudomonas palustris (strain BisA53).